Here is a 194-residue protein sequence, read N- to C-terminus: Type II methyltransferase M.MjaVI (194 aa).

The protein belongs to the N(4)/N(6)-methyltransferase family. N(4) subfamily.

The catalysed reaction is a 2'-deoxycytidine in DNA + S-adenosyl-L-methionine = an N(4)-methyl-2'-deoxycytidine in DNA + S-adenosyl-L-homocysteine + H(+). Functionally, a beta subtype methylase that recognizes the double-stranded sequence 5'-CCGG-3', methylates C-1 on both strands, and protects the DNA from cleavage by the MjaVI endonuclease. This Methanocaldococcus jannaschii (strain ATCC 43067 / DSM 2661 / JAL-1 / JCM 10045 / NBRC 100440) (Methanococcus jannaschii) protein is Type II methyltransferase M.MjaVI (mjaVIM).